Consider the following 560-residue polypeptide: Glutamate--tRNA ligase (560 aa).

A 'HIGH' region motif is present at residues 108-118; sequence PNPSGPLHLGH.

It belongs to the class-I aminoacyl-tRNA synthetase family. Glutamate--tRNA ligase type 2 subfamily.

The protein localises to the cytoplasm. It catalyses the reaction tRNA(Glu) + L-glutamate + ATP = L-glutamyl-tRNA(Glu) + AMP + diphosphate. Its function is as follows. Catalyzes the attachment of glutamate to tRNA(Glu) in a two-step reaction: glutamate is first activated by ATP to form Glu-AMP and then transferred to the acceptor end of tRNA(Glu). The polypeptide is Glutamate--tRNA ligase (Methanocorpusculum labreanum (strain ATCC 43576 / DSM 4855 / Z)).